The following is a 555-amino-acid chain: Glucose-6-phosphate isomerase (555 aa).

The Proton donor role is filled by Glu365. Catalysis depends on residues His396 and Lys522.

This sequence belongs to the GPI family.

The protein localises to the cytoplasm. It carries out the reaction alpha-D-glucose 6-phosphate = beta-D-fructose 6-phosphate. It functions in the pathway carbohydrate biosynthesis; gluconeogenesis. It participates in carbohydrate degradation; glycolysis; D-glyceraldehyde 3-phosphate and glycerone phosphate from D-glucose: step 2/4. Its function is as follows. Catalyzes the reversible isomerization of glucose-6-phosphate to fructose-6-phosphate. This is Glucose-6-phosphate isomerase from Psychrobacter arcticus (strain DSM 17307 / VKM B-2377 / 273-4).